A 322-amino-acid chain; its full sequence is tRNA U34 carboxymethyltransferase (322 aa).

Carboxy-S-adenosyl-L-methionine is bound by residues K91, W105, K110, G129, L179–E180, M195, Y199, and R314.

It belongs to the class I-like SAM-binding methyltransferase superfamily. CmoB family. As to quaternary structure, homotetramer.

It carries out the reaction carboxy-S-adenosyl-L-methionine + 5-hydroxyuridine(34) in tRNA = 5-carboxymethoxyuridine(34) in tRNA + S-adenosyl-L-homocysteine + H(+). Catalyzes carboxymethyl transfer from carboxy-S-adenosyl-L-methionine (Cx-SAM) to 5-hydroxyuridine (ho5U) to form 5-carboxymethoxyuridine (cmo5U) at position 34 in tRNAs. The polypeptide is tRNA U34 carboxymethyltransferase (Pseudomonas paraeruginosa (strain DSM 24068 / PA7) (Pseudomonas aeruginosa (strain PA7))).